Reading from the N-terminus, the 100-residue chain is Integration host factor subunit alpha (100 aa).

It belongs to the bacterial histone-like protein family. Heterodimer of an alpha and a beta chain.

This protein is one of the two subunits of integration host factor, a specific DNA-binding protein that functions in genetic recombination as well as in transcriptional and translational control. In Hahella chejuensis (strain KCTC 2396), this protein is Integration host factor subunit alpha.